The chain runs to 657 residues: MFGHVFSRRTSFLVRCFHVAKKFSNPEPEDILFSALCLNLRQRRWNTLHQFSSSLTNPLISRVLREFRSSPKLALEFYNWVLRSNTVAKSENRFEASCVMIHLLVGSRRFDDALSIMANLMSVEGEKLSPLHVLSGLIRSYQACGSSPDVFDSLVRACTQNGDAQGAYEVIEQTRAEGFCVSVHALNNFMGCLLNVNEIDRFWKVYKEMDSLGYVENVNTFNLVIYSFCKESKLFEALSVFYRMLKCGVWPNVVSFNMMIDGACKTGDMRFALQLLGKMGMMSGNFVSPNAVTYNSVINGFCKAGRLDLAERIRGDMVKSGVDCNERTYGALVDAYGRAGSSDEALRLCDEMTSKGLVVNTVIYNSIVYWLFMEGDIEGAMSVLRDMNSKNMQIDRFTQAIVVRGLCRNGYVKEAVEFQRQISEKKLVEDIVCHNTLMHHFVRDKKLACADQILGSMLVQGLSLDAISFGTLIDGYLKEGKLERALEIYDGMIKMNKTSNLVIYNSIVNGLSKRGMAGAAEAVVNAMEIKDIVTYNTLLNESLKTGNVEEADDILSKMQKQDGEKSVSLVTFNIMINHLCKFGSYEKAKEVLKFMVERGVVPDSITYGTLITSFSKHRSQEKVVELHDYLILQGVTPHEHIYLSIVRPLLDRENGRP.

The transit peptide at Met1–Ala74 directs the protein to the mitochondrion. PPR repeat units follow at residues Ser147–Val181, Ser182–Glu216, Asn217–Pro251, Asn252–Met282, Asn290–Cys324, Asn325–Val359, Asn360–Ile394, Asp395–Glu429, Asp430–Leu464, Asp465–Ser499, Asn500–Lys530, Asp531–Lys565, Ser568–Pro602, and Asp603–Pro637.

The protein belongs to the PPR family. P subfamily.

It localises to the mitochondrion. The chain is Pentatricopeptide repeat-containing protein At1g11710, mitochondrial from Arabidopsis thaliana (Mouse-ear cress).